Reading from the N-terminus, the 195-residue chain is Nucleoside triphosphate pyrophosphatase (195 aa).

Catalysis depends on aspartate 70, which acts as the Proton acceptor.

This sequence belongs to the Maf family. It depends on a divalent metal cation as a cofactor.

The protein localises to the cytoplasm. The catalysed reaction is a ribonucleoside 5'-triphosphate + H2O = a ribonucleoside 5'-phosphate + diphosphate + H(+). The enzyme catalyses a 2'-deoxyribonucleoside 5'-triphosphate + H2O = a 2'-deoxyribonucleoside 5'-phosphate + diphosphate + H(+). Nucleoside triphosphate pyrophosphatase. May have a dual role in cell division arrest and in preventing the incorporation of modified nucleotides into cellular nucleic acids. The sequence is that of Nucleoside triphosphate pyrophosphatase from Synechocystis sp. (strain ATCC 27184 / PCC 6803 / Kazusa).